A 560-amino-acid polypeptide reads, in one-letter code: Oxygen-dependent choline dehydrogenase 1 (560 aa).

An FAD-binding site is contributed by D8–E37. Catalysis depends on H475, which acts as the Proton acceptor.

The protein belongs to the GMC oxidoreductase family. FAD is required as a cofactor.

It carries out the reaction choline + A = betaine aldehyde + AH2. The catalysed reaction is betaine aldehyde + NAD(+) + H2O = glycine betaine + NADH + 2 H(+). It participates in amine and polyamine biosynthesis; betaine biosynthesis via choline pathway; betaine aldehyde from choline (cytochrome c reductase route): step 1/1. Involved in the biosynthesis of the osmoprotectant glycine betaine. Catalyzes the oxidation of choline to betaine aldehyde and betaine aldehyde to glycine betaine at the same rate. This is Oxygen-dependent choline dehydrogenase 1 from Chromohalobacter salexigens (strain ATCC BAA-138 / DSM 3043 / CIP 106854 / NCIMB 13768 / 1H11).